Here is a 113-residue protein sequence, read N- to C-terminus: Large ribosomal subunit protein uL24 (113 aa).

Belongs to the universal ribosomal protein uL24 family. Part of the 50S ribosomal subunit.

One of two assembly initiator proteins, it binds directly to the 5'-end of the 23S rRNA, where it nucleates assembly of the 50S subunit. Its function is as follows. One of the proteins that surrounds the polypeptide exit tunnel on the outside of the subunit. This is Large ribosomal subunit protein uL24 from Synechococcus sp. (strain RCC307).